Reading from the N-terminus, the 24-residue chain is Brevinin-1GRa (24 aa).

Expressed by the skin glands.

The protein localises to the secreted. In terms of biological role, antimicrobial peptide active against the Gram-positive bacterium S.aureus (MIC=12.5 uM) and against the Gram-negative bacteria E.coli (MIC=25 uM). This Odorrana grahami (Yunnanfu frog) protein is Brevinin-1GRa.